We begin with the raw amino-acid sequence, 767 residues long: 5-methyltetrahydropteroyltriglutamate--homocysteine methyltransferase (767 aa).

Residues 16–19 and K122 contribute to the 5-methyltetrahydropteroyltri-L-glutamate site; that span reads RELK. Residues 443-445 and E496 contribute to the L-homocysteine site; that span reads IGS. L-methionine is bound by residues 443–445 and E496; that span reads IGS. Residues 527–528 and W573 each bind 5-methyltetrahydropteroyltri-L-glutamate; that span reads RC. An L-homocysteine-binding site is contributed by D611. D611 contributes to the L-methionine binding site. E617 serves as a coordination point for 5-methyltetrahydropteroyltri-L-glutamate. Positions 653, 655, and 677 each coordinate Zn(2+). Catalysis depends on H706, which acts as the Proton donor. A Zn(2+)-binding site is contributed by C738.

It belongs to the vitamin-B12 independent methionine synthase family. Zn(2+) is required as a cofactor.

It carries out the reaction 5-methyltetrahydropteroyltri-L-glutamate + L-homocysteine = tetrahydropteroyltri-L-glutamate + L-methionine. It functions in the pathway amino-acid biosynthesis; L-methionine biosynthesis via de novo pathway; L-methionine from L-homocysteine (MetE route): step 1/1. In terms of biological role, catalyzes the transfer of a methyl group from 5-methyltetrahydrofolate to homocysteine resulting in methionine formation. This Ectopseudomonas mendocina (strain ymp) (Pseudomonas mendocina) protein is 5-methyltetrahydropteroyltriglutamate--homocysteine methyltransferase.